A 122-amino-acid polypeptide reads, in one-letter code: Chorismate mutase AroH (122 aa).

The 119-residue stretch at 2–120 (VRGIRGAITV…AVRLRPDLES (119 aa)) folds into the Chorismate mutase aroH-type domain. 3 residues coordinate prephenate: Arg6, Arg89, and Tyr107.

As to quaternary structure, homotrimer.

It localises to the cytoplasm. The enzyme catalyses chorismate = prephenate. It participates in metabolic intermediate biosynthesis; prephenate biosynthesis; prephenate from chorismate: step 1/1. Inhibited by 40% with 500 uM tyrosine, and a tyrosine concentration as high as 5 mM reduced activity to 5%. Its function is as follows. Catalyzes the Claisen rearrangement of chorismate to prephenate. Probably involved in the aromatic amino acid biosynthesis. This is Chorismate mutase AroH from Thermus thermophilus.